We begin with the raw amino-acid sequence, 166 residues long: uncharacterized protein (166 aa).

The segment covering 73 to 88 (SKLNNNNNSNNNNKMA) has biased composition (low complexity). Disordered stretches follow at residues 73 to 101 (SKLN…EKDK) and 126 to 166 (PQSS…EFNN). Positions 89–101 (VDNKDNKDNEKDK) are enriched in basic and acidic residues. A compositionally biased stretch (low complexity) spans 134-154 (SPTHKSPSSSPKTISPVKVSP). Residues 155-166 (TSSPIKNPEFNN) show a composition bias toward polar residues.

This is an uncharacterized protein from Dictyostelium discoideum (Social amoeba).